Consider the following 214-residue polypeptide: Imidazole glycerol phosphate synthase subunit HisH (214 aa).

One can recognise a Glutamine amidotransferase type-1 domain in the interval 3 to 211; it reads TIAVIDYDMG…VSKVIPKNLA (209 aa). Cys-81 acts as the Nucleophile in catalysis. Residues His-186 and Glu-188 contribute to the active site.

Heterodimer of HisH and HisF.

It localises to the cytoplasm. It carries out the reaction 5-[(5-phospho-1-deoxy-D-ribulos-1-ylimino)methylamino]-1-(5-phospho-beta-D-ribosyl)imidazole-4-carboxamide + L-glutamine = D-erythro-1-(imidazol-4-yl)glycerol 3-phosphate + 5-amino-1-(5-phospho-beta-D-ribosyl)imidazole-4-carboxamide + L-glutamate + H(+). The catalysed reaction is L-glutamine + H2O = L-glutamate + NH4(+). It functions in the pathway amino-acid biosynthesis; L-histidine biosynthesis; L-histidine from 5-phospho-alpha-D-ribose 1-diphosphate: step 5/9. Its function is as follows. IGPS catalyzes the conversion of PRFAR and glutamine to IGP, AICAR and glutamate. The HisH subunit catalyzes the hydrolysis of glutamine to glutamate and ammonia as part of the synthesis of IGP and AICAR. The resulting ammonia molecule is channeled to the active site of HisF. The chain is Imidazole glycerol phosphate synthase subunit HisH from Trichodesmium erythraeum (strain IMS101).